Reading from the N-terminus, the 628-residue chain is Voltage-gated potassium channel KCNC4 (628 aa).

Disordered regions lie at residues 1–24 (MISSVCVSSYRGRKSGNKPPSKTC) and 62–88 (LAWLADPDGGGRPESDGGGAGSSGSSG). Residues 1-28 (MISSVCVSSYRGRKSGNKPPSKTCLKEE) form an inactivation gate region. At 1 to 230 (MISSVCVSSY…EDPYSSRAAR (230 aa)) the chain is on the cytoplasmic side. Residues S8, S9, S15, and S21 each carry the phosphoserine modification. Over residues 77–88 (DGGGAGSSGSSG) the composition is skewed to gly residues. H120, C126, C147, and C148 together coordinate Zn(2+). Residues 231–251 (VVAFASLFFILVSITTFCLET) form a helical membrane-spanning segment. N-linked (GlcNAc...) asparagine glycans are attached at residues N260 and N269. Residues 282-302 (EPILTYIEGVCVMWFTLEFLV) form a helical membrane-spanning segment. Topologically, residues 303–316 (RIVCCPDTLDFVKN) are cytoplasmic. A helical membrane pass occupies residues 317-337 (LLNIIDFVAILPFYLEVGLSG). Residues 349 to 368 (FLRVVRFVRILRIFKLTRHF) form a helical; Voltage-sensor membrane-spanning segment. The Cytoplasmic segment spans residues 369 to 384 (VGLRVLGHTLRASTNE). The chain crosses the membrane as a helical span at residues 385-405 (FLLLIIFLALGVLIFATMIYY). K(+) contacts are provided by T440, L441, G442, and Y443. Residues 440–445 (TLGYGD) carry the Selectivity filter motif. The chain crosses the membrane as a helical span at residues 456–476 (VGALCALAGVLTIAMPVPVIV). Topologically, residues 477–628 (NNFGMYYSLA…CVPVSHTCAL (152 aa)) are cytoplasmic. The tract at residues 493 to 584 (PKKRKKHVPR…RRALRRSGTR (92 aa)) is disordered. Residues 531 to 546 (AREEGVVERKRADSKQ) show a composition bias toward basic and acidic residues.

It belongs to the potassium channel family. C (Shaw) (TC 1.A.1.2) subfamily. Kv3.4/KCNC4 sub-subfamily. In terms of assembly, homotetramer. Heterotetramer of potassium channel proteins. Post-translationally, phosphorylation of serine residues in the inactivation gate inhibits rapid channel closure.

The protein resides in the membrane. It carries out the reaction K(+)(in) = K(+)(out). Voltage-gated potassium channel that opens in response to the voltage difference across the membrane, forming a potassium-selective channel through which potassium ions pass in accordance with their electrochemical gradient. The channel displays rapid activation and inactivation kinetics. The polypeptide is Voltage-gated potassium channel KCNC4 (Mus musculus (Mouse)).